Reading from the N-terminus, the 169-residue chain is Ribosome maturation factor RimM (169 aa).

The PRC barrel domain maps to 93 to 167; it reads PENSFFISDI…KISVILPKGL (75 aa).

The protein belongs to the RimM family. In terms of assembly, binds ribosomal protein uS19.

It localises to the cytoplasm. Its function is as follows. An accessory protein needed during the final step in the assembly of 30S ribosomal subunit, possibly for assembly of the head region. Essential for efficient processing of 16S rRNA. May be needed both before and after RbfA during the maturation of 16S rRNA. It has affinity for free ribosomal 30S subunits but not for 70S ribosomes. The chain is Ribosome maturation factor RimM from Ruminiclostridium cellulolyticum (strain ATCC 35319 / DSM 5812 / JCM 6584 / H10) (Clostridium cellulolyticum).